The sequence spans 445 residues: 3-phosphoshikimate 1-carboxyvinyltransferase (445 aa).

3-phosphoshikimate contacts are provided by K28, S29, and R33. K28 contacts phosphoenolpyruvate. 2 residues coordinate phosphoenolpyruvate: G102 and R130. Residues S179, S180, Q181, E330, and H357 each contribute to the 3-phosphoshikimate site. Q181 lines the phosphoenolpyruvate pocket. The active-site Proton acceptor is the E330. Phosphoenolpyruvate-binding residues include R361, R405, and K430.

Belongs to the EPSP synthase family. In terms of assembly, monomer.

It is found in the cytoplasm. The enzyme catalyses 3-phosphoshikimate + phosphoenolpyruvate = 5-O-(1-carboxyvinyl)-3-phosphoshikimate + phosphate. It functions in the pathway metabolic intermediate biosynthesis; chorismate biosynthesis; chorismate from D-erythrose 4-phosphate and phosphoenolpyruvate: step 6/7. Catalyzes the transfer of the enolpyruvyl moiety of phosphoenolpyruvate (PEP) to the 5-hydroxyl of shikimate-3-phosphate (S3P) to produce enolpyruvyl shikimate-3-phosphate and inorganic phosphate. The polypeptide is 3-phosphoshikimate 1-carboxyvinyltransferase (Bifidobacterium longum (strain DJO10A)).